The sequence spans 87 residues: Phosphoribosyl-ATP pyrophosphatase (87 aa).

Belongs to the PRA-PH family.

The protein localises to the cytoplasm. It catalyses the reaction 1-(5-phospho-beta-D-ribosyl)-ATP + H2O = 1-(5-phospho-beta-D-ribosyl)-5'-AMP + diphosphate + H(+). Its pathway is amino-acid biosynthesis; L-histidine biosynthesis; L-histidine from 5-phospho-alpha-D-ribose 1-diphosphate: step 2/9. The polypeptide is Phosphoribosyl-ATP pyrophosphatase (Thermobifida fusca (strain YX)).